The following is a 484-amino-acid chain: MENDTWENESSASNHSIDETIVEIPGKYQTMEMIFIATVTGSLSLVTVVGNILVMLSIKVNRQLQTVNNYFLFSLACADLIIGVFSMNLYSLYIIKGYWPLGPIVCDLWLALDYVVSNASVMNLLIISLERXFCVTKPLTYPARRTTKMAGLMIAAAWLLSFELWAPAILFWQFIVGQRTVPSGECYIQFLSNPAVTFGTAIAAFYLPVVIMTILYIHISLASRSRVRRHCPETRQEKKKPISSMKSLLIKQTKNIPKQDAGDKVVEKKNGVSNGKIEKSMTNLQTAEEKETSNESSSASLSHNPPEKQPLSEASSGVVLAPTQSMPPLPAKANTASKWSKIKIVTKQTGNECVTAIEIVPECAIPLPEQANNRPVNVARKFASIARNQVRKKRQMAAREKKVTRTIFAILLAFIITWTPYNVMVLINTFCQTCIPETIWYIGYWLCYVNSTINPACYALCNATFKKTFKHLLMCQYKSIGTAR.

The Extracellular portion of the chain corresponds to 1-32 (MENDTWENESSASNHSIDETIVEIPGKYQTME). N-linked (GlcNAc...) asparagine glycans are attached at residues N3, N8, and N14. A helical transmembrane segment spans residues 33-55 (MIFIATVTGSLSLVTVVGNILVM). Residues 56-69 (LSIKVNRQLQTVNN) are Cytoplasmic-facing. The helical transmembrane segment at 70–90 (YFLFSLACADLIIGVFSMNLY) threads the bilayer. Over 91-107 (SLYIIKGYWPLGPIVCD) the chain is Extracellular. C106 and C186 are oxidised to a cystine. Residues 108–129 (LWLALDYVVSNASVMNLLIISL) form a helical membrane-spanning segment. The Cytoplasmic portion of the chain corresponds to 130–149 (ERXFCVTKPLTYPARRTTKM). A helical membrane pass occupies residues 150–172 (AGLMIAAAWLLSFELWAPAILFW). Residues 173 to 194 (QFIVGQRTVPSGECYIQFLSNP) lie on the Extracellular side of the membrane. A helical membrane pass occupies residues 195–217 (AVTFGTAIAAFYLPVVIMTILYI). Residues 218–406 (HISLASRSRV…AAREKKVTRT (189 aa)) lie on the Cytoplasmic side of the membrane. Positions 255–316 (NIPKQDAGDK…EKQPLSEASS (62 aa)) are disordered. Residues 260 to 270 (DAGDKVVEKKN) are compositionally biased toward basic and acidic residues. Residues 407 to 427 (IFAILLAFIITWTPYNVMVLI) form a helical membrane-spanning segment. Residues 428–441 (NTFCQTCIPETIWY) are Extracellular-facing. The chain crosses the membrane as a helical span at residues 442-461 (IGYWLCYVNSTINPACYALC). Topologically, residues 462-484 (NATFKKTFKHLLMCQYKSIGTAR) are cytoplasmic.

Belongs to the G-protein coupled receptor 1 family. Muscarinic acetylcholine receptor subfamily. CHRM4 sub-subfamily.

Its subcellular location is the cell membrane. It localises to the postsynaptic cell membrane. Its function is as follows. The muscarinic acetylcholine receptor mediates various cellular responses, including inhibition of adenylate cyclase, breakdown of phosphoinositides and modulation of potassium channels through the action of G proteins. Primary transducing effect is inhibition of adenylate cyclase. The protein is Muscarinic acetylcholine receptor M4 (chrm4) of Xenopus laevis (African clawed frog).